The sequence spans 280 residues: Pantothenate synthetase (280 aa).

26–33 contributes to the ATP binding site; sequence MGNLHEGH. His-33 serves as the catalytic Proton donor. Residue Gln-57 participates in (R)-pantoate binding. Gln-57 contributes to the beta-alanine binding site. ATP is bound at residue 145 to 148; the sequence is GKKD. Gln-151 is a (R)-pantoate binding site. ATP is bound by residues Val-174 and 182-185; that span reads LSSR.

Belongs to the pantothenate synthetase family. In terms of assembly, homodimer.

The protein resides in the cytoplasm. It carries out the reaction (R)-pantoate + beta-alanine + ATP = (R)-pantothenate + AMP + diphosphate + H(+). It functions in the pathway cofactor biosynthesis; (R)-pantothenate biosynthesis; (R)-pantothenate from (R)-pantoate and beta-alanine: step 1/1. Functionally, catalyzes the condensation of pantoate with beta-alanine in an ATP-dependent reaction via a pantoyl-adenylate intermediate. In Bordetella avium (strain 197N), this protein is Pantothenate synthetase.